Here is a 568-residue protein sequence, read N- to C-terminus: Adenine deaminase (568 aa).

Belongs to the metallo-dependent hydrolases superfamily. Adenine deaminase family. Requires Mn(2+) as cofactor.

The enzyme catalyses adenine + H2O + H(+) = hypoxanthine + NH4(+). The polypeptide is Adenine deaminase (Clostridium perfringens (strain ATCC 13124 / DSM 756 / JCM 1290 / NCIMB 6125 / NCTC 8237 / Type A)).